The sequence spans 62 residues: MRCVVLFMVSCLLIVLLINHFEEVEAQKWNKCFLRDIFPGKCEHDANAKLRCKEDDAKKTLA.

The signal sequence occupies residues 1–26 (MRCVVLFMVSCLLIVLLINHFEEVEA). Cysteine 42 and cysteine 52 are oxidised to a cystine.

The protein belongs to the DEFL family.

The protein resides in the secreted. Functionally, truncated and inactivated form of SCRA, a protein involved in male-mediated self-incompatibility when active. Most A.thaliana cultivars contain such an inactive form and thus, are self-fertiles. This Arabidopsis thaliana (Mouse-ear cress) protein is Defensin-like protein A (SCRA).